Consider the following 236-residue polypeptide: MATTHLDVCAVVPAAGFGRRMQTECPKQYLSIGNQTILEHSVHALLAHPRVKRVVIAISPGDSRFAQLPLANHPQITVVDGGDERADSVLAGLKAAGDAQWVLVHDAARPCLHQDDLARLLALSETSRTGGILAAPVRDTMKRAEPGKNAIAHTVDRNGLWHALTPQFFPRELLHDCLTRALNEGATITDEASALEYCGFHPQLVEGRADNIKVTRPEDLALAEFYLTRTIHQENT.

Belongs to the IspD/TarI cytidylyltransferase family. IspD subfamily. Homodimer.

It carries out the reaction 2-C-methyl-D-erythritol 4-phosphate + CTP + H(+) = 4-CDP-2-C-methyl-D-erythritol + diphosphate. The protein operates within isoprenoid biosynthesis; isopentenyl diphosphate biosynthesis via DXP pathway; isopentenyl diphosphate from 1-deoxy-D-xylulose 5-phosphate: step 2/6. In terms of biological role, catalyzes the formation of 4-diphosphocytidyl-2-C-methyl-D-erythritol from CTP and 2-C-methyl-D-erythritol 4-phosphate (MEP). The protein is 2-C-methyl-D-erythritol 4-phosphate cytidylyltransferase of Escherichia coli O139:H28 (strain E24377A / ETEC).